The sequence spans 225 residues: Elongation factor 1-beta (225 aa).

The region spanning 2-84 (GFGDLKSPAG…ALGKYGPADV (83 aa)) is the GST C-terminal domain. Lysine 7 is subject to N6-acetyllysine. Residues serine 8 and serine 42 each carry the phosphoserine modification. Positions 78–115 (KYGPADVEDTTGSGATDSKDDDDIDLFGSDDEEESEEA) are disordered. Phosphothreonine is present on residues threonine 88 and threonine 93. Phosphoserine occurs at positions 95 and 106. The segment covering 96 to 113 (KDDDDIDLFGSDDEEESE) has biased composition (acidic residues). A Glycyl lysine isopeptide (Lys-Gly) (interchain with G-Cter in SUMO2) cross-link involves residue lysine 147. Serine 174 carries the post-translational modification Phosphoserine.

It belongs to the EF-1-beta/EF-1-delta family. In terms of assembly, EF-1 is composed of 4 subunits: alpha, beta (alpha subunit of the eEF1B subcomplex), delta (beta subunit of the eEF1B subcomplex), and gamma (gamma subunit of the eEF1B subcomplex). Interacts with elongation factor EEF1A1. Post-translationally, phosphorylation affects the GDP/GTP exchange rate.

Its function is as follows. Catalytic subunit of the guanine nucleotide exchange factor (GEF) (eEF1B subcomplex) of the eukaryotic elongation factor 1 complex (eEF1). Stimulates the exchange of GDP for GTP on elongation factor 1A (eEF1A), probably by displacing GDP from the nucleotide binding pocket in eEF1A. This chain is Elongation factor 1-beta (EEF1B2), found in Homo sapiens (Human).